Consider the following 552-residue polypeptide: 5'-AMP-activated protein kinase catalytic subunit alpha-2 (552 aa).

Positions 16-268 constitute a Protein kinase domain; it reads YVLGDTLGVG…IKDIREHEWF (253 aa). ATP is bound by residues 22 to 30 and K45; that span reads LGVGTFGKV. D139 serves as the catalytic Proton acceptor. Position 172 is a phosphothreonine; by LKB1 and CaMKK2 (T172). At T258 the chain carries Phosphothreonine. Positions 291 to 376 are AIS; it reads EAVKEVCEKF…PERMPPLIAD (86 aa). The residue at position 377 (S377) is a Phosphoserine. Positions 478-519 are disordered; that stretch reads EQRSGSSTPQRSCSAAGLHRPRSSLDSVTAESHSLSGSLSGS. Residues 480 to 490 show a composition bias toward polar residues; that stretch reads RSGSSTPQRSC. S491 carries the post-translational modification Phosphoserine. The span at 509–519 shows a compositional bias: low complexity; that stretch reads SHSLSGSLSGS.

This sequence belongs to the protein kinase superfamily. CAMK Ser/Thr protein kinase family. SNF1 subfamily. As to quaternary structure, AMPK is a heterotrimer of an alpha catalytic subunit (PRKAA1 or PRKAA2), a beta (PRKAB1 or PRKAB2) and a gamma non-catalytic subunits (PRKAG1, PRKAG2 or PRKAG3). Interacts with FNIP1 and FNIP2. Interacts with DUSP29. Interacts with ARF6. The phosphorylated form at Thr-172 mediated by CamKK2 interacts with ACSS2. It depends on Mg(2+) as a cofactor. Post-translationally, ubiquitinated. Phosphorylated at Thr-172 by STK11/LKB1 in complex with STE20-related adapter-alpha (STRADA) pseudo kinase and CAB39. Also phosphorylated at Thr-172 by CAMKK2; triggered by a rise in intracellular calcium ions, without detectable changes in the AMP/ATP ratio. CAMKK1 can also phosphorylate Thr-172, but at much lower level. Dephosphorylated by protein phosphatase 2A and 2C (PP2A and PP2C). Phosphorylated by ULK1; leading to negatively regulate AMPK activity and suggesting the existence of a regulatory feedback loop between ULK1 and AMPK. Dephosphorylated by PPM1A and PPM1B at Thr-172 (mediated by STK11/LKB1).

The protein localises to the cytoplasm. It is found in the nucleus. The enzyme catalyses L-seryl-[protein] + ATP = O-phospho-L-seryl-[protein] + ADP + H(+). It catalyses the reaction L-threonyl-[protein] + ATP = O-phospho-L-threonyl-[protein] + ADP + H(+). The catalysed reaction is L-seryl-[acetyl-CoA carboxylase] + ATP = O-phospho-L-seryl-[acetyl-CoA carboxylase] + ADP + H(+). It carries out the reaction L-seryl-[3-hydroxy-3-methylglutaryl-coenzyme A reductase] + ATP = O-phospho-L-seryl-[3-hydroxy-3-methylglutaryl-coenzyme A reductase] + ADP + H(+). Its activity is regulated as follows. Activated by phosphorylation on Thr-172. Binding of AMP to non-catalytic gamma subunit (PRKAG1, PRKAG2 or PRKAG3) results in allosteric activation, inducing phosphorylation on Thr-172. AMP-binding to gamma subunit also sustains activity by preventing dephosphorylation of Thr-172. ADP also stimulates Thr-172 phosphorylation, without stimulating already phosphorylated AMPK. ATP promotes dephosphorylation of Thr-172, rendering the enzyme inactive. Under physiological conditions AMPK mainly exists in its inactive form in complex with ATP, which is much more abundant than AMP. Selectively inhibited by compound C (6-[4-(2-Piperidin-1-yl-ethoxy)-phenyl)]-3-pyridin-4-yl-pyyrazolo[1,5-a] pyrimidine. Activated by resveratrol, a natural polyphenol present in red wine, and S17834, a synthetic polyphenol. Salicylate/aspirin directly activates kinase activity, primarily by inhibiting Thr-172 dephosphorylation. Functionally, catalytic subunit of AMP-activated protein kinase (AMPK), an energy sensor protein kinase that plays a key role in regulating cellular energy metabolism. In response to reduction of intracellular ATP levels, AMPK activates energy-producing pathways and inhibits energy-consuming processes: inhibits protein, carbohydrate and lipid biosynthesis, as well as cell growth and proliferation. AMPK acts via direct phosphorylation of metabolic enzymes, and by longer-term effects via phosphorylation of transcription regulators. Regulates lipid synthesis by phosphorylating and inactivating lipid metabolic enzymes such as ACACA, ACACB, GYS1, HMGCR and LIPE; regulates fatty acid and cholesterol synthesis by phosphorylating acetyl-CoA carboxylase (ACACA and ACACB) and hormone-sensitive lipase (LIPE) enzymes, respectively. Promotes lipolysis of lipid droplets by mediating phosphorylation of isoform 1 of CHKA (CHKalpha2). Regulates insulin-signaling and glycolysis by phosphorylating IRS1, PFKFB2 and PFKFB3. Involved in insulin receptor/INSR internalization. AMPK stimulates glucose uptake in muscle by increasing the translocation of the glucose transporter SLC2A4/GLUT4 to the plasma membrane, possibly by mediating phosphorylation of TBC1D4/AS160. Regulates transcription and chromatin structure by phosphorylating transcription regulators involved in energy metabolism such as CRTC2/TORC2, FOXO3, histone H2B, HDAC5, MEF2C, MLXIPL/ChREBP, EP300, HNF4A, p53/TP53, SREBF1, SREBF2 and PPARGC1A. Acts as a key regulator of glucose homeostasis in liver by phosphorylating CRTC2/TORC2, leading to CRTC2/TORC2 sequestration in the cytoplasm. In response to stress, phosphorylates 'Ser-36' of histone H2B (H2BS36ph), leading to promote transcription. Acts as a key regulator of cell growth and proliferation by phosphorylating FNIP1, TSC2, RPTOR, WDR24 and ATG1/ULK1: in response to nutrient limitation, negatively regulates the mTORC1 complex by phosphorylating RPTOR component of the mTORC1 complex and by phosphorylating and activating TSC2. Also phosphorylates and inhibits GATOR2 subunit WDR24 in response to nutrient limitation, leading to suppress glucose-mediated mTORC1 activation. In response to energetic stress, phosphorylates FNIP1, inactivating the non-canonical mTORC1 signaling, thereby promoting nuclear translocation of TFEB and TFE3, and inducing transcription of lysosomal or autophagy genes. In response to nutrient limitation, promotes autophagy by phosphorylating and activating ATG1/ULK1. In that process also activates WDR45/WIPI4. Phosphorylates CASP6, thereby preventing its autoprocessing and subsequent activation. AMPK also acts as a regulator of circadian rhythm by mediating phosphorylation of CRY1, leading to destabilize it. May regulate the Wnt signaling pathway by phosphorylating CTNNB1, leading to stabilize it. Also acts as a regulator of cellular polarity by remodeling the actin cytoskeleton; probably by indirectly activating myosin. Also phosphorylates CFTR, EEF2K, KLC1, NOS3 and SLC12A1. Plays an important role in the differential regulation of pro-autophagy (composed of PIK3C3, BECN1, PIK3R4 and UVRAG or ATG14) and non-autophagy (composed of PIK3C3, BECN1 and PIK3R4) complexes, in response to glucose starvation. Can inhibit the non-autophagy complex by phosphorylating PIK3C3 and can activate the pro-autophagy complex by phosphorylating BECN1. Upon glucose starvation, promotes ARF6 activation in a kinase-independent manner leading to cell migration. Upon glucose deprivation mediates the phosphorylation of ACSS2 at 'Ser-659', which exposes the nuclear localization signal of ACSS2, required for its interaction with KPNA1 and nuclear translocation. Upon stress, regulates mitochondrial fragmentation through phosphorylation of MTFR1L. This Sus scrofa (Pig) protein is 5'-AMP-activated protein kinase catalytic subunit alpha-2 (PRKAA2).